Here is a 242-residue protein sequence, read N- to C-terminus: Small ribosomal subunit protein uS5 (242 aa).

Residues 1–14 show a composition bias toward polar residues; sequence MADENSTGPGNQPE. The tract at residues 1 to 65 is disordered; it reads MADENSTGPG…DRRPRDEDGG (65 aa). Residues 41–65 are compositionally biased toward basic and acidic residues; that stretch reads DGGRGGRDGGRGRRDDRRPRDEDGG. An S5 DRBM domain is found at 68–131; sequence LIEKLVHINR…AAAKKAMIRV (64 aa). Residues 204–242 are disordered; sequence EQTSPKSVAQRRGKKVSDLIKRGGASDRAAEAEAAAVTE. A compositionally biased stretch (basic and acidic residues) spans 218–234; that stretch reads KVSDLIKRGGASDRAAE.

This sequence belongs to the universal ribosomal protein uS5 family. Part of the 30S ribosomal subunit. Contacts proteins S4 and S8.

In terms of biological role, with S4 and S12 plays an important role in translational accuracy. Functionally, located at the back of the 30S subunit body where it stabilizes the conformation of the head with respect to the body. This chain is Small ribosomal subunit protein uS5, found in Sphingopyxis alaskensis (strain DSM 13593 / LMG 18877 / RB2256) (Sphingomonas alaskensis).